A 329-amino-acid polypeptide reads, in one-letter code: 4-hydroxythreonine-4-phosphate dehydrogenase (329 aa).

Substrate is bound by residues histidine 136 and threonine 137. Positions 166, 211, and 266 each coordinate a divalent metal cation. Residues lysine 274, asparagine 283, and arginine 292 each coordinate substrate.

This sequence belongs to the PdxA family. Homodimer. Zn(2+) is required as a cofactor. It depends on Mg(2+) as a cofactor. Co(2+) serves as cofactor.

It is found in the cytoplasm. It carries out the reaction 4-(phosphooxy)-L-threonine + NAD(+) = 3-amino-2-oxopropyl phosphate + CO2 + NADH. The protein operates within cofactor biosynthesis; pyridoxine 5'-phosphate biosynthesis; pyridoxine 5'-phosphate from D-erythrose 4-phosphate: step 4/5. In terms of biological role, catalyzes the NAD(P)-dependent oxidation of 4-(phosphooxy)-L-threonine (HTP) into 2-amino-3-oxo-4-(phosphooxy)butyric acid which spontaneously decarboxylates to form 3-amino-2-oxopropyl phosphate (AHAP). This Pseudomonas syringae pv. tomato (strain ATCC BAA-871 / DC3000) protein is 4-hydroxythreonine-4-phosphate dehydrogenase.